Reading from the N-terminus, the 226-residue chain is Holliday junction branch migration complex subunit RuvA (226 aa).

The interval 1–67 (MITSVYAKIE…AINKELYAFK (67 aa)) is domain I. Residues 68-145 (SLKEKEWFKA…YLKNQIVVSD (78 aa)) are domain II. The tract at residues 146–167 (KVEPQIDDDEKIDDSKDLNDDE) is flexible linker. The tract at residues 168–226 (LLSEIVIEAIDCLISLGYKQEQIKTALAEIDLKNESINDSADLVAVIIKQIGLRTSEVS) is domain III.

It belongs to the RuvA family. Homotetramer. Forms an RuvA(8)-RuvB(12)-Holliday junction (HJ) complex. HJ DNA is sandwiched between 2 RuvA tetramers; dsDNA enters through RuvA and exits via RuvB. An RuvB hexamer assembles on each DNA strand where it exits the tetramer. Each RuvB hexamer is contacted by two RuvA subunits (via domain III) on 2 adjacent RuvB subunits; this complex drives branch migration. In the full resolvosome a probable DNA-RuvA(4)-RuvB(12)-RuvC(2) complex forms which resolves the HJ.

The protein localises to the cytoplasm. Functionally, the RuvA-RuvB-RuvC complex processes Holliday junction (HJ) DNA during genetic recombination and DNA repair, while the RuvA-RuvB complex plays an important role in the rescue of blocked DNA replication forks via replication fork reversal (RFR). RuvA specifically binds to HJ cruciform DNA, conferring on it an open structure. The RuvB hexamer acts as an ATP-dependent pump, pulling dsDNA into and through the RuvAB complex. HJ branch migration allows RuvC to scan DNA until it finds its consensus sequence, where it cleaves and resolves the cruciform DNA. This is Holliday junction branch migration complex subunit RuvA from Mycoplasmoides gallisepticum (strain R(low / passage 15 / clone 2)) (Mycoplasma gallisepticum).